The chain runs to 357 residues: Probable 3'(2'),5'-bisphosphate nucleotidase 3 (357 aa).

Aspartate 46 acts as the Proton acceptor in catalysis. Mg(2+) contacts are provided by glutamate 71, aspartate 135, and isoleucine 137. Residue threonine 140 is the Proton acceptor of the active site. Residues threonine 140, serine 256, lysine 259, and arginine 273 each contribute to the adenosine 3',5'-bisphosphate site. The AMP site is built by serine 256, lysine 259, and arginine 273.

It belongs to the inositol monophosphatase superfamily. The cofactor is Mg(2+).

It catalyses the reaction 3'-phosphoadenylyl sulfate + H2O = adenosine 5'-phosphosulfate + phosphate. The enzyme catalyses adenosine 3',5'-bisphosphate + H2O = AMP + phosphate. It carries out the reaction adenosine 2',5'-bisphosphate + H2O = AMP + phosphate. The catalysed reaction is 1D-myo-inositol 1,4-bisphosphate + H2O = 1D-myo-inositol 4-phosphate + phosphate. It catalyses the reaction 1D-myo-inositol 1,3,4-trisphosphate + H2O = 1D-myo-inositol 3,4-bisphosphate + phosphate. It participates in signal transduction; phosphatidylinositol signaling pathway. Its function is as follows. Phosphatase that converts adenosine 3'-phosphate 5'-phosphosulfate (PAPS) to adenosine 5'-phosphosulfate (APS) and 3'(2')-phosphoadenosine 5'-phosphate (PAP) to AMP. Is also able to hydrolyze inositol 1,4-bisphosphate and inositol 1,3,4-trisphosphate. The polypeptide is Probable 3'(2'),5'-bisphosphate nucleotidase 3 (SAL3) (Arabidopsis thaliana (Mouse-ear cress)).